A 179-amino-acid polypeptide reads, in one-letter code: ATP synthase subunit delta (179 aa).

This sequence belongs to the ATPase delta chain family. In terms of assembly, F-type ATPases have 2 components, F(1) - the catalytic core - and F(0) - the membrane proton channel. F(1) has five subunits: alpha(3), beta(3), gamma(1), delta(1), epsilon(1). F(0) has three main subunits: a(1), b(2) and c(10-14). The alpha and beta chains form an alternating ring which encloses part of the gamma chain. F(1) is attached to F(0) by a central stalk formed by the gamma and epsilon chains, while a peripheral stalk is formed by the delta and b chains.

The protein resides in the cell inner membrane. F(1)F(0) ATP synthase produces ATP from ADP in the presence of a proton or sodium gradient. F-type ATPases consist of two structural domains, F(1) containing the extramembraneous catalytic core and F(0) containing the membrane proton channel, linked together by a central stalk and a peripheral stalk. During catalysis, ATP synthesis in the catalytic domain of F(1) is coupled via a rotary mechanism of the central stalk subunits to proton translocation. Functionally, this protein is part of the stalk that links CF(0) to CF(1). It either transmits conformational changes from CF(0) to CF(1) or is implicated in proton conduction. The chain is ATP synthase subunit delta from Koribacter versatilis (strain Ellin345).